The primary structure comprises 164 residues: MKMFVPAVVFAALASASAWANNGDTAQPLEKIAPYPQAEKGMKRQVITLTPQQDESTLKVELLIGQTLNVDCNQHRLGGTLETKTLEGWGYDYYVFDNVTSPVSTMMACPDGKKEQKFVTAWLGEDGMVRYNSKLPIVVYTPANVDVKYRIWKADANVQNAVAR.

A signal peptide spans 1–20; sequence MKMFVPAVVFAALASASAWA. Cysteines 72 and 109 form a disulfide.

Belongs to the protease inhibitor I11 (ecotin) family. As to quaternary structure, homodimer.

Its subcellular location is the periplasm. In terms of biological role, general inhibitor of pancreatic serine proteases: inhibits chymotrypsin, trypsin, elastases, factor X, kallikrein as well as a variety of other proteases. The protein is Ecotin of Salmonella paratyphi A (strain ATCC 9150 / SARB42).